The chain runs to 945 residues: Leucine--tRNA ligase (945 aa).

The short motif at 43–53 (PYPNGAVHIGH) is the 'HIGH' region element. The 'KMSKS' region signature appears at 638 to 642 (KMSKS). Residue lysine 641 coordinates ATP.

It belongs to the class-I aminoacyl-tRNA synthetase family.

The protein resides in the cytoplasm. The catalysed reaction is tRNA(Leu) + L-leucine + ATP = L-leucyl-tRNA(Leu) + AMP + diphosphate. This is Leucine--tRNA ligase from Pyrobaculum islandicum (strain DSM 4184 / JCM 9189 / GEO3).